Consider the following 123-residue polypeptide: Ribosome-binding factor A (123 aa).

This sequence belongs to the RbfA family. In terms of assembly, monomer. Binds 30S ribosomal subunits, but not 50S ribosomal subunits or 70S ribosomes.

The protein localises to the cytoplasm. In terms of biological role, one of several proteins that assist in the late maturation steps of the functional core of the 30S ribosomal subunit. Associates with free 30S ribosomal subunits (but not with 30S subunits that are part of 70S ribosomes or polysomes). Required for efficient processing of 16S rRNA. May interact with the 5'-terminal helix region of 16S rRNA. This chain is Ribosome-binding factor A, found in Trichlorobacter lovleyi (strain ATCC BAA-1151 / DSM 17278 / SZ) (Geobacter lovleyi).